Reading from the N-terminus, the 549-residue chain is Cytoplasmic trehalase (549 aa).

Substrate contacts are provided by residues arginine 168, 175–176, asparagine 212, 221–223, 292–294, and glycine 324; these read WD, RSQ, and RDE. Catalysis depends on proton donor/acceptor residues aspartate 326 and glutamate 509. Glutamate 525 lines the substrate pocket.

This sequence belongs to the glycosyl hydrolase 37 family. Monomer.

The protein resides in the cytoplasm. The enzyme catalyses alpha,alpha-trehalose + H2O = alpha-D-glucose + beta-D-glucose. The protein operates within glycan degradation; trehalose degradation; D-glucose from alpha,alpha-trehalose: step 1/1. In terms of biological role, hydrolyzes trehalose to glucose. Could be involved, in cells returning to low osmolarity conditions, in the utilization of the accumulated cytoplasmic trehalose, which was synthesized in response to high osmolarity. This chain is Cytoplasmic trehalase, found in Escherichia fergusonii (strain ATCC 35469 / DSM 13698 / CCUG 18766 / IAM 14443 / JCM 21226 / LMG 7866 / NBRC 102419 / NCTC 12128 / CDC 0568-73).